Consider the following 313-residue polypeptide: Olfactory receptor 8B3 (313 aa).

Residues M1–Q25 lie on the Extracellular side of the membrane. N5 carries N-linked (GlcNAc...) asparagine glycosylation. Residues P26–I46 traverse the membrane as a helical segment. The Cytoplasmic segment spans residues I47 to H54. A helical transmembrane segment spans residues L55–S75. The Extracellular segment spans residues V76–T99. C97 and C189 are disulfide-bonded. A helical transmembrane segment spans residues Q100–Y120. Topologically, residues D121 to Q139 are cytoplasmic. Residues V140–T160 traverse the membrane as a helical segment. Residues G161–V197 lie on the Extracellular side of the membrane. Residues V198–S217 traverse the membrane as a helical segment. Residues Y218–A237 lie on the Cytoplasmic side of the membrane. A helical membrane pass occupies residues F238 to M258. Topologically, residues Y259–G270 are extracellular. The helical transmembrane segment at K271–L291 threads the bilayer. Residues R292–F313 are Cytoplasmic-facing.

The protein belongs to the G-protein coupled receptor 1 family.

Its subcellular location is the cell membrane. Its function is as follows. Odorant receptor. The chain is Olfactory receptor 8B3 (OR8B3) from Homo sapiens (Human).